A 365-amino-acid polypeptide reads, in one-letter code: Mannonate dehydratase 1 (365 aa).

It belongs to the mannonate dehydratase family. Fe(2+) serves as cofactor. Mn(2+) is required as a cofactor.

It carries out the reaction D-mannonate = 2-dehydro-3-deoxy-D-gluconate + H2O. Its pathway is carbohydrate metabolism; pentose and glucuronate interconversion. In terms of biological role, catalyzes the dehydration of D-mannonate. This chain is Mannonate dehydratase 1, found in Bacillus licheniformis (strain ATCC 14580 / DSM 13 / JCM 2505 / CCUG 7422 / NBRC 12200 / NCIMB 9375 / NCTC 10341 / NRRL NRS-1264 / Gibson 46).